A 468-amino-acid polypeptide reads, in one-letter code: Eukaryotic translation initiation factor 3 subunit M (468 aa).

Residues 42–61 (PLIEPLRQQEQSEEEPDRKQ) are disordered. One can recognise a PCI domain in the interval 206–377 (DLELAQTHVV…SEFLVHRATY (172 aa)). Residues 418-468 (MQAAAEETGQGKSGDKGAKGGDRRRNPQQQQQSQPSQPQQAREVELVGGAE) form a disordered region. Residues 430-442 (SGDKGAKGGDRRR) show a composition bias toward basic and acidic residues. The span at 444-457 (PQQQQQSQPSQPQQ) shows a compositional bias: low complexity.

This sequence belongs to the eIF-3 subunit M family. Component of the eukaryotic translation initiation factor 3 (eIF-3) complex.

It is found in the cytoplasm. Its function is as follows. Component of the eukaryotic translation initiation factor 3 (eIF-3) complex, which is involved in protein synthesis of a specialized repertoire of mRNAs and, together with other initiation factors, stimulates binding of mRNA and methionyl-tRNAi to the 40S ribosome. The eIF-3 complex specifically targets and initiates translation of a subset of mRNAs involved in cell proliferation. This Neosartorya fischeri (strain ATCC 1020 / DSM 3700 / CBS 544.65 / FGSC A1164 / JCM 1740 / NRRL 181 / WB 181) (Aspergillus fischerianus) protein is Eukaryotic translation initiation factor 3 subunit M.